Consider the following 86-residue polypeptide: MKNLIAELLFKLAQKEEESKELCAQVEALEIIVTAMLRNMAQNDQQRLIDQVEGALYEVKPDASIPDDDTELLRNYVKKLLKHPRQ.

Positions M1 to M36 form a coiled coil.

Belongs to the IraP family. As to quaternary structure, interacts with RssB.

It localises to the cytoplasm. Its function is as follows. Inhibits RpoS proteolysis by regulating RssB activity, thereby increasing the stability of the sigma stress factor RpoS especially during phosphate starvation, but also in stationary phase and during nitrogen starvation. Its effect on RpoS stability is due to its interaction with RssB, which probably blocks the interaction of RssB with RpoS, and the consequent delivery of the RssB-RpoS complex to the ClpXP protein degradation pathway. In Escherichia coli O7:K1 (strain IAI39 / ExPEC), this protein is Anti-adapter protein IraP.